The primary structure comprises 281 residues: Acetylglutamate kinase (281 aa).

Substrate is bound by residues 64–65, Arg86, and Asn179; that span reads GG.

It belongs to the acetylglutamate kinase family. ArgB subfamily.

It localises to the cytoplasm. It catalyses the reaction N-acetyl-L-glutamate + ATP = N-acetyl-L-glutamyl 5-phosphate + ADP. It functions in the pathway amino-acid biosynthesis; L-arginine biosynthesis; N(2)-acetyl-L-ornithine from L-glutamate: step 2/4. Catalyzes the ATP-dependent phosphorylation of N-acetyl-L-glutamate. The protein is Acetylglutamate kinase of Campylobacter curvus (strain 525.92).